A 4388-amino-acid chain; its full sequence is Intermembrane lipid transfer protein VPS13D (4388 aa).

Residues 2 to 115 form the Chorein N-terminal domain; that stretch reads LEGLVAWVLN…ERERKKALLQ (114 aa). Ser-663 carries the phosphoserine modification. The disordered stretch occupies residues 745 to 796; the sequence is QDNSRRKSRDGSASEETQFSDDEYKTPLATPPNTPPPESSSSNGEKTPPFSG. Residues 747-756 are compositionally biased toward basic and acidic residues; the sequence is NSRRKSRDGS. Residues 773–782 show a composition bias toward pro residues; the sequence is ATPPNTPPPE. Ser-1034, Ser-1038, Ser-1042, Ser-1138, and Ser-1341 each carry phosphoserine. Residues 1563–1582 are disordered; the sequence is ASATSSPCPDSPLPPLSTCG. Ser-1598, Ser-1603, and Ser-1699 each carry phosphoserine. Disordered stretches follow at residues 1741-1771, 2070-2108, and 2122-2145; these read RPTS…VDEP, QDKE…QFTM, and FVPS…ESSS. A Phosphothreonine modification is found at Thr-1761. Ser-1765 bears the Phosphoserine mark. A compositionally biased stretch (polar residues) spans 2123–2144; sequence VPSTSTKQQGPQPTLSVGQESS. A phosphoserine mark is found at Ser-2435, Ser-2671, Ser-2861, Ser-2864, and Ser-2983. Residues 2633–2676 enclose the UBA domain; the sequence is TLDPVLELQLARLQELGFSMDDCRKALLACQGQLKKAASWLFKN. One can recognise an SHR-BD domain in the interval 3276-3558; that stretch reads LKIFISAPYW…LDYAWDEPTL (283 aa). N6-acetyllysine is present on Lys-3524.

It belongs to the VPS13 family. Widely expressed.

Mediates the transfer of lipids between membranes at organelle contact sites. Functions in promoting mitochondrial clearance by mitochondrial autophagy (mitophagy), also possibly by positively regulating mitochondrial fission. Mitophagy plays an important role in regulating cell health and mitochondrial size and homeostasis. This Homo sapiens (Human) protein is Intermembrane lipid transfer protein VPS13D.